Consider the following 213-residue polypeptide: Phosphoheptose isomerase (213 aa).

The SIS domain maps to 50 to 208 (MAETFEGGGR…IDLVERMLGY (159 aa)). 65-67 (NGG) provides a ligand contact to substrate. Zn(2+) contacts are provided by His-74 and Glu-78. Substrate is bound by residues Glu-78, 109–110 (ND), 135–137 (STS), Ser-140, and Gln-188. Positions 188 and 196 each coordinate Zn(2+).

It belongs to the SIS family. GmhA subfamily. Requires Zn(2+) as cofactor.

The protein resides in the cytoplasm. It catalyses the reaction 2 D-sedoheptulose 7-phosphate = D-glycero-alpha-D-manno-heptose 7-phosphate + D-glycero-beta-D-manno-heptose 7-phosphate. It functions in the pathway carbohydrate biosynthesis; D-glycero-D-manno-heptose 7-phosphate biosynthesis; D-glycero-alpha-D-manno-heptose 7-phosphate and D-glycero-beta-D-manno-heptose 7-phosphate from sedoheptulose 7-phosphate: step 1/1. Its function is as follows. Catalyzes the isomerization of sedoheptulose 7-phosphate in D-glycero-D-manno-heptose 7-phosphate. The protein is Phosphoheptose isomerase of Chlorobium phaeovibrioides (strain DSM 265 / 1930) (Prosthecochloris vibrioformis (strain DSM 265)).